The chain runs to 401 residues: MSNKNIVLAFSGGLDTSFCIPYLKEQGYAVHTVFADTGGVDEDERDFIEKRAAELGVASHLTVDGGPAIWDGFVKQLVWAGEAYQGQYPLLVSDRYLIVDAVLQRADALGTCAVAHGCTGMGNDQVRFDLAIKAQGDYTIIAPIREIQKEHTQTRLYEQKYLEERGFGVRAKQKNYTINENLLGITLSGGEIDKWEAPGEGARGWCAPRSAWPTDPLTVAIKFVEGEAVAVDGKPLSGPQILMKLNKLFASYGVGRGIYTGDTVIGLKGRIVYEAPGLTALLTAHRALEDAVLTKQQNRFKPHIARKWVELVYEGFFHDPLKTDLETFLKSSQANVNGEIVLETRGGRVDAVAVRSPHILTSKGVTYAQTADWGIEEAEGFIKLFGMSSTLYAHVNRSLRS.

ATP is bound by residues 9–17 and alanine 35; that span reads AFSGGLDTS. Positions 88 and 93 each coordinate L-citrulline. An ATP-binding site is contributed by glycine 117. Residues threonine 119, asparagine 123, and aspartate 124 each contribute to the L-aspartate site. Asparagine 123 contributes to the L-citrulline binding site. Residues arginine 127 and tyrosine 273 each coordinate L-citrulline.

Belongs to the argininosuccinate synthase family. Type 1 subfamily. As to quaternary structure, homotetramer.

The protein resides in the cytoplasm. The enzyme catalyses L-citrulline + L-aspartate + ATP = 2-(N(omega)-L-arginino)succinate + AMP + diphosphate + H(+). It functions in the pathway amino-acid biosynthesis; L-arginine biosynthesis; L-arginine from L-ornithine and carbamoyl phosphate: step 2/3. This is Argininosuccinate synthase from Xylella fastidiosa (strain Temecula1 / ATCC 700964).